The chain runs to 155 residues: Protein-export protein SecB (155 aa).

This sequence belongs to the SecB family. In terms of assembly, homotetramer, a dimer of dimers. One homotetramer interacts with 1 SecA dimer.

Its subcellular location is the cytoplasm. One of the proteins required for the normal export of preproteins out of the cell cytoplasm. It is a molecular chaperone that binds to a subset of precursor proteins, maintaining them in a translocation-competent state. It also specifically binds to its receptor SecA. The polypeptide is Protein-export protein SecB (Cronobacter sakazakii (strain ATCC BAA-894) (Enterobacter sakazakii)).